Here is a 425-residue protein sequence, read N- to C-terminus: Alpha-(1,3)-fucosyltransferase C (425 aa).

The Cytoplasmic segment spans residues 1-37 (MYLGRVHCSFEVPGLLSGRVGHMSMAVRSVRLACGPR). Residues 38-58 (GALLLLLLVLLGVLVVLHKVT) form a helical; Signal-anchor for type II membrane protein membrane-spanning segment. Residues 59–425 (QSPLLNQNKI…SCRLQSRIRL (367 aa)) are Lumenal-facing. N-linked (GlcNAc...) asparagine glycosylation is found at N187 and N230.

The protein belongs to the glycosyltransferase 10 family.

The protein resides in the golgi apparatus. It localises to the golgi stack membrane. The protein operates within protein modification; protein glycosylation. In Drosophila melanogaster (Fruit fly), this protein is Alpha-(1,3)-fucosyltransferase C (FucTC).